The chain runs to 206 residues: Small ribosomal subunit protein uS4 (206 aa).

The S4 RNA-binding domain maps to Ser-96–Ala-157.

The protein belongs to the universal ribosomal protein uS4 family. Part of the 30S ribosomal subunit. Contacts protein S5. The interaction surface between S4 and S5 is involved in control of translational fidelity.

Functionally, one of the primary rRNA binding proteins, it binds directly to 16S rRNA where it nucleates assembly of the body of the 30S subunit. In terms of biological role, with S5 and S12 plays an important role in translational accuracy. In Alkalilimnicola ehrlichii (strain ATCC BAA-1101 / DSM 17681 / MLHE-1), this protein is Small ribosomal subunit protein uS4.